The sequence spans 421 residues: U-box domain-containing protein 26 (421 aa).

The 75-residue stretch at 13 to 87 (QIPYHFRCPI…QEWCVANRSN (75 aa)) folds into the U-box domain.

The catalysed reaction is S-ubiquitinyl-[E2 ubiquitin-conjugating enzyme]-L-cysteine + [acceptor protein]-L-lysine = [E2 ubiquitin-conjugating enzyme]-L-cysteine + N(6)-ubiquitinyl-[acceptor protein]-L-lysine.. Its pathway is protein modification; protein ubiquitination. Functionally, functions as an E3 ubiquitin ligase. In Arabidopsis thaliana (Mouse-ear cress), this protein is U-box domain-containing protein 26 (PUB26).